Consider the following 431-residue polypeptide: tRNA-2-methylthio-N(6)-dimethylallyladenosine synthase (431 aa).

Positions 4–120 constitute an MTTase N-terminal domain; sequence RAVYIKTFGC…IENIIENQVS (117 aa). Cys13, Cys49, Cys83, Cys154, Cys158, and Cys161 together coordinate [4Fe-4S] cluster. The 228-residue stretch at 140–367 folds into the Radical SAM core domain; that stretch reads RKDCVKAWVN…LKLQDEITER (228 aa). One can recognise a TRAM domain in the interval 370–430; sequence KRLEGKIQEV…RHSLEGDIIS (61 aa).

Belongs to the methylthiotransferase family. MiaB subfamily. Monomer. The cofactor is [4Fe-4S] cluster.

The protein localises to the cytoplasm. It catalyses the reaction N(6)-dimethylallyladenosine(37) in tRNA + (sulfur carrier)-SH + AH2 + 2 S-adenosyl-L-methionine = 2-methylsulfanyl-N(6)-dimethylallyladenosine(37) in tRNA + (sulfur carrier)-H + 5'-deoxyadenosine + L-methionine + A + S-adenosyl-L-homocysteine + 2 H(+). In terms of biological role, catalyzes the methylthiolation of N6-(dimethylallyl)adenosine (i(6)A), leading to the formation of 2-methylthio-N6-(dimethylallyl)adenosine (ms(2)i(6)A) at position 37 in tRNAs that read codons beginning with uridine. The protein is tRNA-2-methylthio-N(6)-dimethylallyladenosine synthase of Thermodesulfovibrio yellowstonii (strain ATCC 51303 / DSM 11347 / YP87).